A 281-amino-acid polypeptide reads, in one-letter code: Pantothenate synthetase (281 aa).

Met-30 to His-37 provides a ligand contact to ATP. His-37 serves as the catalytic Proton donor. Gln-61 is a binding site for (R)-pantoate. Gln-61 is a binding site for beta-alanine. Gly-147–Asp-150 serves as a coordination point for ATP. Gln-153 provides a ligand contact to (R)-pantoate. ATP contacts are provided by residues Ile-176 and Lys-184 to Arg-187.

The protein belongs to the pantothenate synthetase family. As to quaternary structure, homodimer.

Its subcellular location is the cytoplasm. It catalyses the reaction (R)-pantoate + beta-alanine + ATP = (R)-pantothenate + AMP + diphosphate + H(+). It participates in cofactor biosynthesis; (R)-pantothenate biosynthesis; (R)-pantothenate from (R)-pantoate and beta-alanine: step 1/1. In terms of biological role, catalyzes the condensation of pantoate with beta-alanine in an ATP-dependent reaction via a pantoyl-adenylate intermediate. The polypeptide is Pantothenate synthetase (Clostridium acetobutylicum (strain ATCC 824 / DSM 792 / JCM 1419 / IAM 19013 / LMG 5710 / NBRC 13948 / NRRL B-527 / VKM B-1787 / 2291 / W)).